The primary structure comprises 329 residues: DNA-directed RNA polymerase subunit alpha (329 aa).

The alpha N-terminal domain (alpha-NTD) stretch occupies residues 1–235 (MQGFVEDFLK…QQLEAFVDLR (235 aa)). The interval 249-329 (FEPVLLRPVD…NWPPKSLLED (81 aa)) is alpha C-terminal domain (alpha-CTD).

The protein belongs to the RNA polymerase alpha chain family. Homodimer. The RNAP catalytic core consists of 2 alpha, 1 beta, 1 beta' and 1 omega subunit. When a sigma factor is associated with the core the holoenzyme is formed, which can initiate transcription.

It catalyses the reaction RNA(n) + a ribonucleoside 5'-triphosphate = RNA(n+1) + diphosphate. DNA-dependent RNA polymerase catalyzes the transcription of DNA into RNA using the four ribonucleoside triphosphates as substrates. This Buchnera aphidicola subsp. Cinara cedri (strain Cc) protein is DNA-directed RNA polymerase subunit alpha.